The sequence spans 825 residues: 5E5 antigen (825 aa).

Positions 126 to 825 (LSRDGYETET…RPRPSPKSPR (700 aa)) are disordered. Residues 157–180 (PRAPPEPPDPGAPRPPPDPGPLPL) show a composition bias toward pro residues. The segment covering 191–200 (VQVSTEQLLM) has biased composition (polar residues). Residues 217–237 (TRGDRTQEGGEKPREQREGPR) are compositionally biased toward basic and acidic residues. A compositionally biased stretch (low complexity) spans 247 to 256 (QQEESPQQEP). Basic and acidic residues-rich tracts occupy residues 257–277 (SSER…HEGE), 315–342 (VPKD…RDWT), and 392–406 (QERE…ESPR). Basic residues predominate over residues 437 to 449 (RRPRKRRGRKGRM). Over residues 455 to 477 (TTATSASATGGPAEEAGASAPEG) the composition is skewed to low complexity. The segment covering 485–505 (GRARGPRQQARRRHGPQRRRG) has biased composition (basic residues). A compositionally biased stretch (polar residues) spans 524–536 (GTTSGEQRADQSQ). The span at 537–562 (TLPALAGAPTAHAHAVPGPGPAAATL) shows a compositional bias: low complexity. Basic residues predominate over residues 565-575 (RGRRGSWRGGR). The segment covering 576-588 (RGGGAGASGGGRG) has biased composition (gly residues). The segment covering 721 to 733 (FPPPPPTRPPPVL) has biased composition (pro residues). Low complexity predominate over residues 734-750 (LPLLRLTCAGDPGASRP).

In terms of tissue distribution, expressed in neurons.

The protein localises to the nucleus. Functionally, might have DNA-binding ability. This chain is 5E5 antigen, found in Rattus norvegicus (Rat).